Consider the following 493-residue polypeptide: Argininosuccinate lyase (493 aa).

It belongs to the lyase 1 family. Argininosuccinate lyase subfamily.

Its subcellular location is the cytoplasm. The enzyme catalyses 2-(N(omega)-L-arginino)succinate = fumarate + L-arginine. Its pathway is amino-acid biosynthesis; L-arginine biosynthesis; L-arginine from L-ornithine and carbamoyl phosphate: step 3/3. The protein is Argininosuccinate lyase of Clavibacter sepedonicus (Clavibacter michiganensis subsp. sepedonicus).